The chain runs to 68 residues: Riparin-1.6 (68 aa).

The first 15 residues, 1 to 15, serve as a signal peptide directing secretion; the sequence is MKIIVFLAVLMLVSA. Residues 16–41 constitute a propeptide that is removed on maturation; sequence QVCLVSAAEMEHSSDNELSSRDLVKR. A disulfide bridge links Cys47 with Cys53. A Cysteine amide modification is found at Cys53. A propeptide spanning residues 57–68 is cleaved from the precursor; that stretch reads DIESSEGANGGE.

Expressed by the skin glands.

It localises to the secreted. The chain is Riparin-1.6 from Crinia riparia (Streambank froglet).